An 855-amino-acid chain; its full sequence is Pre-mRNA-splicing factor SYF1 (855 aa).

HAT repeat units follow at residues 15 to 47 (LVFE…FKQG), 48 to 80 (APKP…ARRA), 90 to 122 (PAYE…FLMD), 124 to 158 (GRVT…FLRS), 160 to 192 (PLPE…SSDR), 198 to 230 (QRLA…LISQ), 235 to 268 (VQSL…YYIR), 270 to 305 (GHFE…FEES), and 369 to 407 (GRPR…FYED). The residue at position 420 (Lys420) is an N6-acetyllysine. HAT repeat units lie at residues 498 to 530 (GTFQ…FLEE), 532 to 566 (KYFE…KFIS), 571 to 605 (RKLE…LEEE), 643 to 677 (YGVT…MECK), and 679 to 713 (GEID…FEVR). Positions 808–855 (AELAQQANPEEIQLGEDEDEDEMDLEPNEVRLEQQSVPAAVFGSLKED) are disordered. Residues 820 to 834 (QLGEDEDEDEMDLEP) show a composition bias toward acidic residues. Residue Ser851 is modified to Phosphoserine.

The protein belongs to the crooked-neck family. In terms of assembly, associates with RNA polymerase II, the TCR-specific proteins CKN1/CSA and ERCC6/CSB, and XPA. Identified in the spliceosome C complex. Component of the XAB2 complex, a multimeric protein complex composed of XAB2, PRPF19, AQR, ZNF830, ISY1, and PPIE. Identified in a pentameric intron-binding (IB) complex composed of AQR, XAB2, ISY1, ZNF830 and PPIE that is incorporated into the spliceosome as a preassembled complex. The IB complex does not contain PRPF19.

It localises to the nucleus. Its function is as follows. Involved in pre-mRNA splicing as component of the spliceosome. Involved in transcription-coupled repair (TCR), transcription and pre-mRNA splicing. The protein is Pre-mRNA-splicing factor SYF1 (Xab2) of Mus musculus (Mouse).